A 105-amino-acid polypeptide reads, in one-letter code: Putative neurotoxin 10 (105 aa).

A signal peptide spans Met1 to Ala21.

This sequence belongs to the scolopendra neurotoxin 10 family. In terms of processing, contains 3 disulfide bonds. Expressed by the venom gland.

The protein resides in the secreted. The polypeptide is Putative neurotoxin 10 (Scolopendra subspinipes (Vietnamese centipede)).